Reading from the N-terminus, the 185-residue chain is Lipid A acyltransferase PagP (185 aa).

An N-terminal signal peptide occupies residues 1-14 (MKLKPVLYLLMLLG). Cys15 carries N-palmitoyl cysteine lipidation. Cys15 carries S-diacylglycerol cysteine lipidation. Residues His57, Asp100, and Ser101 contribute to the active site.

Belongs to the lipid A palmitoyltransferase family. As to quaternary structure, homodimer.

Its subcellular location is the cell outer membrane. The catalysed reaction is a lipid A + a 1,2-diacyl-sn-glycero-3-phosphocholine = a hepta-acyl lipid A + a 2-acyl-sn-glycero-3-phosphocholine. It carries out the reaction a lipid IVA + a 1,2-diacyl-sn-glycero-3-phosphocholine = a lipid IVB + a 2-acyl-sn-glycero-3-phosphocholine. It catalyses the reaction a lipid IIA + a 1,2-diacyl-sn-glycero-3-phosphocholine = a lipid IIB + a 2-acyl-sn-glycero-3-phosphocholine. Its function is as follows. Transfers a fatty acid residue from the sn-1 position of a phospholipid to the N-linked hydroxyfatty acid chain on the proximal unit of lipid A or its precursors. The chain is Lipid A acyltransferase PagP from Erwinia pyrifoliae (strain DSM 12163 / CIP 106111 / Ep16/96).